Consider the following 241-residue polypeptide: Small ribosomal subunit protein uS2 (241 aa).

Belongs to the universal ribosomal protein uS2 family.

The protein is Small ribosomal subunit protein uS2 of Hamiltonella defensa subsp. Acyrthosiphon pisum (strain 5AT).